The sequence spans 82 residues: Host transcription reprogramming factor 10 (82 aa).

Residues 1-19 (MQIFNMVSLVALFALGATA) form the signal peptide. The C2H2-type zinc finger occupies 57–81 (WVCHACNKQFTTPAALQKHKDTVVH).

It localises to the secreted. Its subcellular location is the host nucleus. Probable secreted effector that translocates into the nuclei of host cells to reprogram the expression of targeted genes by binding on effector binding elements in rice. This chain is Host transcription reprogramming factor 10, found in Pyricularia oryzae (strain 70-15 / ATCC MYA-4617 / FGSC 8958) (Rice blast fungus).